A 502-amino-acid chain; its full sequence is Probable malate:quinone oxidoreductase (502 aa).

It belongs to the MQO family. FAD serves as cofactor.

It carries out the reaction (S)-malate + a quinone = a quinol + oxaloacetate. It functions in the pathway carbohydrate metabolism; tricarboxylic acid cycle; oxaloacetate from (S)-malate (quinone route): step 1/1. In Synechococcus sp. (strain CC9605), this protein is Probable malate:quinone oxidoreductase.